The following is a 299-amino-acid chain: B3 domain-containing transcription factor NGA2 (299 aa).

Residues 1 to 21 (MNQEDKEKPIEEASSSMEREH) form a disordered region. The TF-B3 DNA-binding region spans 23–129 (FDKVVTPSDV…KLYIDWRRRP (107 aa)). The disordered stretch occupies residues 226–249 (GGGGSVNSTEEESSSSGGSIPRGR).

The protein resides in the nucleus. Its function is as follows. Regulates lateral organ growth. Functionally redundant with NGA1, NGA3 and NGA4. This is B3 domain-containing transcription factor NGA2 (NGA2) from Arabidopsis thaliana (Mouse-ear cress).